The primary structure comprises 588 residues: Arginine--tRNA ligase (588 aa).

The short motif at 124-134 (PNVAKPMHVGH) is the 'HIGH' region element.

The protein belongs to the class-I aminoacyl-tRNA synthetase family. In terms of assembly, monomer.

It is found in the cytoplasm. It carries out the reaction tRNA(Arg) + L-arginine + ATP = L-arginyl-tRNA(Arg) + AMP + diphosphate. The chain is Arginine--tRNA ligase from Maricaulis maris (strain MCS10) (Caulobacter maris).